The following is a 248-amino-acid chain: Triosephosphate isomerase (248 aa).

N10 and K12 together coordinate D-glyceraldehyde 3-phosphate. Catalysis depends on H95, which acts as the Electrophile. E165 acts as the Proton acceptor in catalysis. Residues G171, L230, and 232–233 contribute to the D-glyceraldehyde 3-phosphate site; that span reads GN.

Belongs to the triosephosphate isomerase family. Homodimer.

The catalysed reaction is D-glyceraldehyde 3-phosphate = dihydroxyacetone phosphate. Its pathway is carbohydrate biosynthesis; gluconeogenesis. The protein operates within carbohydrate degradation; glycolysis; D-glyceraldehyde 3-phosphate from glycerone phosphate: step 1/1. Its function is as follows. Catalyzes the interconversion of glyceraldehyde 3-phosphate and dihydroxyacetone phosphate in the glycolytic and gluconeogenic pathways. This chain is Triosephosphate isomerase, found in Plasmodium falciparum (isolate 3D7).